Here is a 457-residue protein sequence, read N- to C-terminus: UDP-N-acetylmuramate--L-alanine ligase (457 aa).

109–115 lines the ATP pocket; sequence GTDGKTT.

This sequence belongs to the MurCDEF family.

The protein resides in the cytoplasm. The catalysed reaction is UDP-N-acetyl-alpha-D-muramate + L-alanine + ATP = UDP-N-acetyl-alpha-D-muramoyl-L-alanine + ADP + phosphate + H(+). Its pathway is cell wall biogenesis; peptidoglycan biosynthesis. Functionally, cell wall formation. In Thermotoga sp. (strain RQ2), this protein is UDP-N-acetylmuramate--L-alanine ligase.